Consider the following 302-residue polypeptide: Nucleotide-binding protein Bcep1808_2900 (302 aa).

ATP is bound at residue 8 to 15 (GISGSGKS). 57-60 (DARS) is a GTP binding site.

The protein belongs to the RapZ-like family.

In terms of biological role, displays ATPase and GTPase activities. This chain is Nucleotide-binding protein Bcep1808_2900, found in Burkholderia vietnamiensis (strain G4 / LMG 22486) (Burkholderia cepacia (strain R1808)).